The following is a 250-amino-acid chain: DNA repair protein RecO (250 aa).

The protein belongs to the RecO family.

Its function is as follows. Involved in DNA repair and RecF pathway recombination. This is DNA repair protein RecO from Rhodospirillum centenum (strain ATCC 51521 / SW).